Reading from the N-terminus, the 355-residue chain is Mitochondrial import inner membrane translocase subunit TIM50 (355 aa).

A mitochondrion-targeting transit peptide spans 1–44; the sequence is MAASAAVFLRLRSGLRQGARGLCARLATPPPRAPDQAAEIGSRA. Residues 25-61 form a disordered region; it reads RLATPPPRAPDQAAEIGSRAGTKAQTQGPQQQRSSEG. At 45 to 67 the chain is on the mitochondrial matrix side; it reads GTKAQTQGPQQQRSSEGPSYAKK. Polar residues predominate over residues 47 to 61; sequence KAQTQGPQQQRSSEG. The chain crosses the membrane as a helical span at residues 68 to 88; it reads VALWLARLLGAGGTVSVIYIF. At 89 to 355 the chain is on the mitochondrial intermembrane side; the sequence is GNNAVDENGA…SRLWPRSKQP (267 aa). The FCP1 homology domain maps to 145-288; the sequence is YYQPPYTLVL…LDLSAFLKTI (144 aa). The residue at position 343 (S343) is a Phosphoserine.

This sequence belongs to the TIM50 family. In terms of assembly, component of the TIM23 complex at least composed of TIMM23, TIMM17 (TIMM17A or TIMM17B) and TIMM50; within this complex, directly interacts with TIMM23. The complex interacts with the TIMM44 component of the PAM complex and with DNAJC15.

Its subcellular location is the mitochondrion inner membrane. Essential component of the TIM23 complex, a complex that mediates the translocation of transit peptide-containing proteins across the mitochondrial inner membrane. Has some phosphatase activity in vitro; however such activity may not be relevant in vivo. In Bos taurus (Bovine), this protein is Mitochondrial import inner membrane translocase subunit TIM50 (TIMM50).